Reading from the N-terminus, the 107-residue chain is Probable insulin-like peptide beta-type 3 (107 aa).

Positions 1–19 (MKLSVVLALFIIFQLGAAS) are cleaved as a signal peptide. Residues 20-55 (LMRNWMFDFEKELEHDYDDSEIGFHNIHSLMARSRR) constitute a propeptide that is removed on maturation. Cystine bridges form between C62-C90, C74-C103, C78-C104, and C89-C94.

The protein belongs to the insulin family.

The protein resides in the secreted. The chain is Probable insulin-like peptide beta-type 3 (ins-3) from Caenorhabditis elegans.